Here is a 910-residue protein sequence, read N- to C-terminus: Protein translocase subunit SecA (910 aa).

ATP contacts are provided by residues glutamine 89, 107–111 (GEGKT), and aspartate 502. The Zn(2+) site is built by cysteine 889, cysteine 891, cysteine 900, and histidine 901.

Belongs to the SecA family. Monomer and homodimer. Part of the essential Sec protein translocation apparatus which comprises SecA, SecYEG and auxiliary proteins SecDF-YajC and YidC. Zn(2+) is required as a cofactor.

Its subcellular location is the cell inner membrane. The protein resides in the cytoplasm. It catalyses the reaction ATP + H2O + cellular proteinSide 1 = ADP + phosphate + cellular proteinSide 2.. Functionally, part of the Sec protein translocase complex. Interacts with the SecYEG preprotein conducting channel. Has a central role in coupling the hydrolysis of ATP to the transfer of proteins into and across the cell membrane, serving both as a receptor for the preprotein-SecB complex and as an ATP-driven molecular motor driving the stepwise translocation of polypeptide chains across the membrane. In Bartonella bacilliformis (strain ATCC 35685 / KC583 / Herrer 020/F12,63), this protein is Protein translocase subunit SecA.